The following is a 315-amino-acid chain: Aspartate carbamoyltransferase catalytic subunit (315 aa).

Residues arginine 64 and threonine 65 each contribute to the carbamoyl phosphate site. Lysine 92 contributes to the L-aspartate binding site. Carbamoyl phosphate-binding residues include arginine 114, histidine 142, and glutamine 145. 2 residues coordinate L-aspartate: arginine 175 and arginine 229. Carbamoyl phosphate contacts are provided by glycine 270 and proline 271.

This sequence belongs to the aspartate/ornithine carbamoyltransferase superfamily. ATCase family. As to quaternary structure, heterododecamer (2C3:3R2) of six catalytic PyrB chains organized as two trimers (C3), and six regulatory PyrI chains organized as three dimers (R2).

The catalysed reaction is carbamoyl phosphate + L-aspartate = N-carbamoyl-L-aspartate + phosphate + H(+). Its pathway is pyrimidine metabolism; UMP biosynthesis via de novo pathway; (S)-dihydroorotate from bicarbonate: step 2/3. Functionally, catalyzes the condensation of carbamoyl phosphate and aspartate to form carbamoyl aspartate and inorganic phosphate, the committed step in the de novo pyrimidine nucleotide biosynthesis pathway. This chain is Aspartate carbamoyltransferase catalytic subunit, found in Methylorubrum extorquens (strain CM4 / NCIMB 13688) (Methylobacterium extorquens).